The chain runs to 500 residues: Probable malate:quinone oxidoreductase (500 aa).

The protein belongs to the MQO family. It depends on FAD as a cofactor.

The enzyme catalyses (S)-malate + a quinone = a quinol + oxaloacetate. The protein operates within carbohydrate metabolism; tricarboxylic acid cycle; oxaloacetate from (S)-malate (quinone route): step 1/1. In Bacillus thuringiensis (strain Al Hakam), this protein is Probable malate:quinone oxidoreductase.